The sequence spans 204 residues: Protein FAM167A (204 aa).

Residues 58-80 form a disordered region; it reads GLAVSDGSTELEKDAGLKPRATP. The stretch at 113–146 forms a coiled coil; that stretch reads LRKELMEMRIQDQQLARQLMRLRGDINKLKVEQT.

This sequence belongs to the FAM167 (SEC) family.

The polypeptide is Protein FAM167A (fam167a) (Danio rerio (Zebrafish)).